A 129-amino-acid polypeptide reads, in one-letter code: Small ribosomal subunit protein uS8 (129 aa).

The protein belongs to the universal ribosomal protein uS8 family. As to quaternary structure, part of the 30S ribosomal subunit. Contacts proteins S5 and S12.

One of the primary rRNA binding proteins, it binds directly to 16S rRNA central domain where it helps coordinate assembly of the platform of the 30S subunit. The chain is Small ribosomal subunit protein uS8 from Colwellia psychrerythraea (strain 34H / ATCC BAA-681) (Vibrio psychroerythus).